A 275-amino-acid polypeptide reads, in one-letter code: 3-methyl-2-oxobutanoate hydroxymethyltransferase (275 aa).

Asp-49 and Asp-88 together coordinate Mg(2+). 3-methyl-2-oxobutanoate-binding positions include 49-50 (DS), Asp-88, and Lys-118. Glu-120 serves as a coordination point for Mg(2+). The active-site Proton acceptor is Glu-187.

It belongs to the PanB family. Homodecamer; pentamer of dimers. It depends on Mg(2+) as a cofactor.

It is found in the cytoplasm. The enzyme catalyses 3-methyl-2-oxobutanoate + (6R)-5,10-methylene-5,6,7,8-tetrahydrofolate + H2O = 2-dehydropantoate + (6S)-5,6,7,8-tetrahydrofolate. It functions in the pathway cofactor biosynthesis; (R)-pantothenate biosynthesis; (R)-pantoate from 3-methyl-2-oxobutanoate: step 1/2. Functionally, catalyzes the reversible reaction in which hydroxymethyl group from 5,10-methylenetetrahydrofolate is transferred onto alpha-ketoisovalerate to form ketopantoate. The polypeptide is 3-methyl-2-oxobutanoate hydroxymethyltransferase (Bartonella quintana (strain Toulouse) (Rochalimaea quintana)).